Reading from the N-terminus, the 360-residue chain is MRVFNFSAGPAAMPEEVLRQAADEMLDWHGSGMSVMEMSHRGKEFMSIHEAALTDLRDLLGVPASHRILFLQGGGIAENAIVPMNLLGSRKTADFVVTGSWSQKSFTEAKKYGTPHLAATGKTEDGYTRAPVRAEWQLSDDPAYVHLCTNETIDGVETFEIPDLGDVPLVADVSSHILSRPMDVAKYGVLFGGAQKNIGMAGVTLVIVREDLLDRALSICPSAFEWKTIAANNSLYNTPPTYAIYIAGLVFQWLKRQGGLEAIEARNIEKAKLLYDTIDSSSFYLNKVEPAARSRMNVPFFLADETRNEDFLAGAKARGLLQLKGHKSVGGMRASIYNAVPLEGVKALVEYMKDFEQRGA.

Residue arginine 41 coordinates L-glutamate. Tryptophan 101, threonine 152, aspartate 172, and glutamine 195 together coordinate pyridoxal 5'-phosphate. Position 196 is an N6-(pyridoxal phosphate)lysine (lysine 196). 237-238 (NT) contacts pyridoxal 5'-phosphate.

It belongs to the class-V pyridoxal-phosphate-dependent aminotransferase family. SerC subfamily. In terms of assembly, homodimer. Pyridoxal 5'-phosphate is required as a cofactor.

The protein localises to the cytoplasm. It carries out the reaction O-phospho-L-serine + 2-oxoglutarate = 3-phosphooxypyruvate + L-glutamate. The enzyme catalyses 4-(phosphooxy)-L-threonine + 2-oxoglutarate = (R)-3-hydroxy-2-oxo-4-phosphooxybutanoate + L-glutamate. It participates in amino-acid biosynthesis; L-serine biosynthesis; L-serine from 3-phospho-D-glycerate: step 2/3. Its pathway is cofactor biosynthesis; pyridoxine 5'-phosphate biosynthesis; pyridoxine 5'-phosphate from D-erythrose 4-phosphate: step 3/5. In terms of biological role, catalyzes the reversible conversion of 3-phosphohydroxypyruvate to phosphoserine and of 3-hydroxy-2-oxo-4-phosphonooxybutanoate to phosphohydroxythreonine. This Burkholderia lata (strain ATCC 17760 / DSM 23089 / LMG 22485 / NCIMB 9086 / R18194 / 383) protein is Phosphoserine aminotransferase.